A 544-amino-acid chain; its full sequence is High affinity immunoglobulin alpha and immunoglobulin mu Fc receptor (544 aa).

The first 16 residues, 1 to 16 (MPLFLILCLLQGSSFA), serve as a signal peptide directing secretion. The Extracellular segment spans residues 17 to 462 (LPQKRPHPRW…TFPEDESSSR (446 aa)). Residues 61 to 169 (PNALKGSRLV…NMLFLSMNLT (109 aa)) form the Ig-like V-type domain. Positions 75–97 (GGAVTIQCHYAPSSVNRHQRKYW) are mediates immunoglobulin Fc fragment-binding. Cysteine 82 and cysteine 153 are disulfide-bonded. An N-linked (GlcNAc...) asparagine glycan is attached at asparagine 167. The interval 218 to 325 (DTVASTPGTS…TTKADRPRED (108 aa)) is disordered. Polar residues-rich tracts occupy residues 220–232 (VAST…TTAS) and 280–291 (ASKSRSMSNTTE). The span at 307-325 (ASKDRREITTTKADRPRED) shows a compositional bias: basic and acidic residues. The chain crosses the membrane as a helical span at residues 463–483 (TLAPVSTMLALFMLMALVLLQ). Topologically, residues 484 to 544 (RKLRRRRTSQ…LTAPERNPGP (61 aa)) are cytoplasmic. The segment at 511 to 544 (PQPDQLPHVERKMLQDDSLPAGASLTAPERNPGP) is disordered.

In terms of assembly, interacts with IGHM; this interaction facilitates the endocytosis of IgM-coated microbes or IgM-antigen immune complexes. N-glycosylated.

It localises to the cell membrane. Functionally, functions as a receptor for the Fc fragment of IgA and IgM. Binds IgA and IgM with high affinity and mediates their endocytosis. May function in the immune response to microbes mediated by IgA and IgM. This chain is High affinity immunoglobulin alpha and immunoglobulin mu Fc receptor (FCAMR), found in Pongo abelii (Sumatran orangutan).